The following is a 330-amino-acid chain: Bifunctional pinoresinol-lariciresinol reductase 2 (330 aa).

NADP(+) is bound by residues 28–34, Arg-53, and Lys-62; that span reads GGTGYLG. The active-site Proton acceptor is the Lys-156. Arg-160 is a binding site for NADP(+). His-288 contacts substrate.

It belongs to the NmrA-type oxidoreductase family. Isoflavone reductase subfamily. As to quaternary structure, dimer. In terms of tissue distribution, expressed in leaves, stems, leaves and seeds.

It carries out the reaction (+)-lariciresinol + NADP(+) = (+)-pinoresinol + NADPH + H(+). The catalysed reaction is (-)-secoisolariciresinol + NADP(+) = (+)-lariciresinol + NADPH + H(+). Functionally, reductase involved in lignan biosynthesis. Catalyzes the enantioselective conversion of (+)-pinoresinol into (+)-lariciresinol and of (+)-lariciresinol into (-)-secoisolariciresinol. Abstracts the 4R-hydride from the NADPH cofactor during catalysis. This chain is Bifunctional pinoresinol-lariciresinol reductase 2 (PLR_Lu2), found in Linum usitatissimum (Flax).